Here is a 499-residue protein sequence, read N- to C-terminus: Myocyte-specific enhancer factor 2A (499 aa).

One can recognise an MADS-box domain in the interval 3–57 (RKKIQITRIMDERNRQVTFTKRKFGLMKKAYELSVLCDCEIALIIFNSSNKLFQY). The residue at position 4 (lysine 4) is an N6-acetyllysine. A DNA-binding region (mef2-type) is located at residues 58–86 (ASTDMDKVLLKYTEYNEPHESRTNSDIVE). Lysine 117 bears the N6-acetyllysine mark. Positions 173–185 (TSTTMLSPPQTTL) are enriched in low complexity. Positions 173 to 269 (TSTTMLSPPQ…GGGLGMNNRK (97 aa)) are disordered. Over residues 210 to 233 (TDLTVPNGAGTSPVGNGVWNSRAS) the composition is skewed to polar residues. N6-acetyllysine is present on residues lysine 248, lysine 253, lysine 269, and lysine 281. Positions 265-282 (MNNRKPDLRVVIPPSSKG) are required for interaction with MAPKs. Positions 288 to 295 (TEEDELEL) are beta domain. Residues 380–392 (VSGSQLSQGSNLS) show a composition bias toward low complexity. Positions 380-499 (VSGSQLSQGS…KRMRMDTWVT (120 aa)) are disordered. Lysine 402 bears the N6-acetyllysine; alternate mark. A Glycyl lysine isopeptide (Lys-Gly) (interchain with G-Cter in SUMO); alternate cross-link involves residue lysine 402. Positions 421–436 (QQPPQQPQPPQPPQQP) are enriched in pro residues. Positions 445–458 (SPVDSLSSSSSSYD) are enriched in low complexity. 2 stretches are compositionally biased toward basic and acidic residues: residues 459–469 (GSDREDPRSDF) and 480–499 (NSED…TWVT).

In terms of assembly, binds DNA as a homo- or heterodimer. Post-translationally, sumoylation on Lys-402 is enhanced by PIAS1 and represses transcriptional activity. Has no effect on nuclear location nor on DNA binding. Sumoylated by SUMO1 and, to a lesser extent by SUMO2 and SUMO3. Acetylation on Lys-402 activates transcriptional activity. Expressed in both embryonic and adult tissues with high expression in heart and skeletal muscle. Also expressed in gut, lung and brain of 15 dpc embryos and adults.

The protein resides in the nucleus. Functionally, transcriptional activator which binds specifically to the MEF2 element, 5'-YTA[AT](4)TAR-3', found in numerous muscle-specific genes. Mediates cellular functions in skeletal and cardiac muscle development,. This Gallus gallus (Chicken) protein is Myocyte-specific enhancer factor 2A (MEF2A).